Here is a 263-residue protein sequence, read N- to C-terminus: Malonyl-[acyl-carrier protein] O-methyltransferase (263 aa).

This sequence belongs to the methyltransferase superfamily.

It carries out the reaction malonyl-[ACP] + S-adenosyl-L-methionine = malonyl-[ACP] methyl ester + S-adenosyl-L-homocysteine. The protein operates within cofactor biosynthesis; biotin biosynthesis. Its function is as follows. Converts the free carboxyl group of a malonyl-thioester to its methyl ester by transfer of a methyl group from S-adenosyl-L-methionine (SAM). It allows to synthesize pimeloyl-ACP via the fatty acid synthetic pathway. The polypeptide is Malonyl-[acyl-carrier protein] O-methyltransferase (Chlorobium luteolum (strain DSM 273 / BCRC 81028 / 2530) (Pelodictyon luteolum)).